The chain runs to 223 residues: RNA-free ribonuclease P (223 aa).

The protein belongs to the HARP family.

The enzyme catalyses Endonucleolytic cleavage of RNA, removing 5'-extranucleotides from tRNA precursor.. RNA-free RNase P that catalyzes the removal of the 5'-leader sequence from pre-tRNA to produce the mature 5'-terminus. The polypeptide is RNA-free ribonuclease P (Methanococcus maripaludis (strain C5 / ATCC BAA-1333)).